The following is a 1094-amino-acid chain: Probable arabinosyltransferase C (1094 aa).

13 consecutive transmembrane segments (helical) span residues 28-50, 232-251, 264-286, 341-360, 373-392, 431-453, 466-488, 530-552, 565-582, 586-608, 620-642, 657-679, and 700-722; these read IARY…TPLL, AAMI…LHIL, PARW…WWHF, SIWM…WVIS, TSRA…WLPL, IGAL…LVAI, RFGV…IPIF, SIAR…AMSL, SRRI…MMFT, WTHH…AVAV, TVFA…GWWY, WRWS…AAWF, and LAGI…EVVS. The span at 817-831 shows a compositional bias: low complexity; it reads GSEPGTEGGTTAAPG. The tract at residues 817-836 is disordered; the sequence is GSEPGTEGGTTAAPGINGSR.

It belongs to the emb family.

It localises to the cell membrane. Functionally, arabinosyl transferase responsible for the polymerization of arabinose into the arabinan of arabinogalactan. This Mycobacterium tuberculosis (strain CDC 1551 / Oshkosh) protein is Probable arabinosyltransferase C (embC).